The chain runs to 128 residues: NADH-quinone oxidoreductase subunit A (128 aa).

Transmembrane regions (helical) follow at residues 12–32, 66–86, and 96–116; these read FAIF…LSFL, FYLI…LYAW, and LGFY…VYLV.

Belongs to the complex I subunit 3 family. NDH-1 is composed of 14 different subunits. Subunits NuoA, H, J, K, L, M, N constitute the membrane sector of the complex.

It is found in the cell membrane. It carries out the reaction a quinone + NADH + 5 H(+)(in) = a quinol + NAD(+) + 4 H(+)(out). In terms of biological role, NDH-1 shuttles electrons from NADH, via FMN and iron-sulfur (Fe-S) centers, to quinones in the respiratory chain. The immediate electron acceptor for the enzyme in this species is believed to be ubiquinone. Couples the redox reaction to proton translocation (for every two electrons transferred, four hydrogen ions are translocated across the cytoplasmic membrane), and thus conserves the redox energy in a proton gradient. This is NADH-quinone oxidoreductase subunit A from Baumannia cicadellinicola subsp. Homalodisca coagulata.